The sequence spans 178 residues: Transcription antitermination protein NusB (178 aa).

This sequence belongs to the NusB family.

Functionally, involved in transcription antitermination. Required for transcription of ribosomal RNA (rRNA) genes. Binds specifically to the boxA antiterminator sequence of the ribosomal RNA (rrn) operons. The sequence is that of Transcription antitermination protein NusB from Alkalilimnicola ehrlichii (strain ATCC BAA-1101 / DSM 17681 / MLHE-1).